Reading from the N-terminus, the 253-residue chain is tRNA pseudouridine synthase A (253 aa).

D52 acts as the Nucleophile in catalysis. Y110 contacts substrate.

This sequence belongs to the tRNA pseudouridine synthase TruA family. As to quaternary structure, homodimer.

The enzyme catalyses uridine(38/39/40) in tRNA = pseudouridine(38/39/40) in tRNA. Its function is as follows. Formation of pseudouridine at positions 38, 39 and 40 in the anticodon stem and loop of transfer RNAs. This is tRNA pseudouridine synthase A from Thermus thermophilus (strain ATCC BAA-163 / DSM 7039 / HB27).